The chain runs to 480 residues: Serralysin (480 aa).

Position 181 (histidine 181) interacts with Zn(2+). Glutamate 182 is a catalytic residue. The Zn(2+) site is built by histidine 185 and histidine 191. Ca(2+)-binding residues include arginine 260, aspartate 263, aspartate 292, glycine 294, glycine 295, aspartate 297, threonine 334, and glutamate 336. Hemolysin-type calcium-binding repeat units lie at residues isoleucine 339 to leucine 356 and lysine 357 to leucine 374.

It belongs to the peptidase M10B family. It depends on Zn(2+) as a cofactor. Ca(2+) serves as cofactor.

Its subcellular location is the secreted. The enzyme catalyses Preferential cleavage of bonds with hydrophobic residues in P1'.. The protein is Serralysin (prtA) of Photorhabdus laumondii subsp. laumondii (strain DSM 15139 / CIP 105565 / TT01) (Photorhabdus luminescens subsp. laumondii).